Here is a 42-residue protein sequence, read N- to C-terminus: Envelope protein P10 (42 aa).

The chain crosses the membrane as a helical span at residues 20–40; it reads TTAAKIAVVYALVGLVGGLLL.

It is found in the virion membrane. Involved in cell lysis. The sequence is that of Envelope protein P10 (P10) from Pseudomonas savastanoi pv. phaseolicola (Pseudomonas syringae pv. phaseolicola).